Here is a 308-residue protein sequence, read N- to C-terminus: Exosporium protein A (308 aa).

It is found in the spore wall. This chain is Exosporium protein A, found in Clostridium sporogenes (strain ATCC 15579).